Reading from the N-terminus, the 421-residue chain is Non-homologous end-joining factor LIF1 (421 aa).

Positions 1–196 are interaction with NEJ1; that stretch reads MSQLTEFISC…VEQLAREREL (196 aa). Residues 365 to 421 are disordered; that stretch reads GIQISAGRSDEDYGDISGSESETDASAGEKKSSNHSEQSGNDREPCLQTESETDIET. The span at 391-409 shows a compositional bias: basic and acidic residues; sequence AGEKKSSNHSEQSGNDREP.

Belongs to the XRCC4-XLF family. XLF subfamily. As to quaternary structure, interacts with DNL4 (via BRCT domain). Interacts (via N-terminus) with NEJ1 (via C-terminus); the interaction is direct. The DNL4-LIF1 complex interacts with POL4.

Its subcellular location is the cytoplasm. The protein resides in the nucleus. In terms of biological role, involved in non-homologous repair of DNA double-strand breaks. Stabilizes DNL4. The polypeptide is Non-homologous end-joining factor LIF1 (LIF1) (Saccharomyces cerevisiae (strain ATCC 204508 / S288c) (Baker's yeast)).